The sequence spans 218 residues: Glycerol-3-phosphate acyltransferase (218 aa).

5 consecutive transmembrane segments (helical) span residues 4 to 24 (IALG…AILI), 54 to 74 (TAAI…WLAY), 80 to 100 (PFYL…PIFF), 107 to 127 (GVAT…GLMM), and 130 to 150 (WLLT…SALI).

Belongs to the PlsY family. In terms of assembly, probably interacts with PlsX.

The protein resides in the cell inner membrane. It catalyses the reaction an acyl phosphate + sn-glycerol 3-phosphate = a 1-acyl-sn-glycero-3-phosphate + phosphate. It participates in lipid metabolism; phospholipid metabolism. Its function is as follows. Catalyzes the transfer of an acyl group from acyl-phosphate (acyl-PO(4)) to glycerol-3-phosphate (G3P) to form lysophosphatidic acid (LPA). This enzyme utilizes acyl-phosphate as fatty acyl donor, but not acyl-CoA or acyl-ACP. In Photorhabdus laumondii subsp. laumondii (strain DSM 15139 / CIP 105565 / TT01) (Photorhabdus luminescens subsp. laumondii), this protein is Glycerol-3-phosphate acyltransferase.